Reading from the N-terminus, the 160-residue chain is Transcriptional repressor NrdR (160 aa).

Polar residues predominate over residues 1 to 11 (MRCPNCNSLDT). The disordered stretch occupies residues 1 to 20 (MRCPNCNSLDTQVKDSRPTE). A zinc finger lies at 3 to 34 (CPNCNSLDTQVKDSRPTEDSSVIRRRRVCIAC). In terms of domain architecture, ATP-cone spans 49–139 (LTVIKRNGRR…VYRNFREAKD (91 aa)).

Belongs to the NrdR family. Zn(2+) serves as cofactor.

Negatively regulates transcription of bacterial ribonucleotide reductase nrd genes and operons by binding to NrdR-boxes. This is Transcriptional repressor NrdR from Rhodopseudomonas palustris (strain BisB5).